Here is a 172-residue protein sequence, read N- to C-terminus: Secretory-abundant heat soluble protein 64681 (172 aa).

The N-terminal stretch at 1-19 (MSRTIVALILLGLAALAAA) is a signal peptide. Positions 30-59 (EWAGKAWLGKWVSTDRSENWDAFVEALGLP) are SAHS-c1. Residues 74–102 (WKEGDHYHHQIIIADKSYKQDIQFKLGEE) are SAHS-c2. Residues Asn-108 and Asn-133 are each glycosylated (N-linked (GlcNAc...) asparagine). An SAHS-c3 region spans residues 115 to 164 (KYTEVGDNLQNEVKIPSKNKTISDSYVVKGDELEKTYKINDVVAKRWYKK).

The protein belongs to the Secretory-abundant heat soluble protein (SAHS) family.

It is found in the secreted. Its function is as follows. Secreted heat soluble protein acting as a molecular shield in water-deficient condition. Tardigrade-specific intrinsically disordered proteins (TDPs) are essential for desiccation tolerance by forming non-crystalline amorphous solids upon desiccation, and this vitrified state mirrors their protective capabilities. The sequence is that of Secretory-abundant heat soluble protein 64681 from Hypsibius exemplaris (Freshwater tardigrade).